A 198-amino-acid polypeptide reads, in one-letter code: Protein-L-isoaspartate O-methyltransferase (198 aa).

Ser50 is an active-site residue.

It belongs to the methyltransferase superfamily. L-isoaspartyl/D-aspartyl protein methyltransferase family.

It localises to the cytoplasm. The enzyme catalyses [protein]-L-isoaspartate + S-adenosyl-L-methionine = [protein]-L-isoaspartate alpha-methyl ester + S-adenosyl-L-homocysteine. Catalyzes the methyl esterification of L-isoaspartyl residues in peptides and proteins that result from spontaneous decomposition of normal L-aspartyl and L-asparaginyl residues. It plays a role in the repair and/or degradation of damaged proteins. The protein is Protein-L-isoaspartate O-methyltransferase of Thermosipho melanesiensis (strain DSM 12029 / CIP 104789 / BI429).